The sequence spans 722 residues: Polyribonucleotide nucleotidyltransferase (722 aa).

Residues aspartate 495 and aspartate 501 each contribute to the Mg(2+) site. The KH domain maps to 562-621; it reads PRLLSFRIDPELIGTVIGPGGRTIKGITERTNTKIDIEDGGIVTIASHDGVAAEEAQKII. An S1 motif domain is found at 631 to 699; the sequence is GEIFTGSITR…NRGRINLTLR (69 aa). Positions 701–711 are enriched in polar residues; that stretch reads VSQNNNDMNYP. A disordered region spans residues 701 to 722; it reads VSQNNNDMNYPQPTPTPVAPLN. The segment covering 712–722 has biased composition (pro residues); it reads QPTPTPVAPLN.

It belongs to the polyribonucleotide nucleotidyltransferase family. Mg(2+) serves as cofactor.

The protein localises to the cytoplasm. It carries out the reaction RNA(n+1) + phosphate = RNA(n) + a ribonucleoside 5'-diphosphate. Involved in mRNA degradation. Catalyzes the phosphorolysis of single-stranded polyribonucleotides processively in the 3'- to 5'-direction. This is Polyribonucleotide nucleotidyltransferase from Prochlorococcus marinus (strain MIT 9211).